The following is a 491-amino-acid chain: Cyclin-A1-3 (491 aa).

The segment covering 1 to 21 (MSSSLASRRSSSSSAAKRPAA) has biased composition (low complexity). Disordered regions lie at residues 1 to 32 (MSSS…AAGA) and 69 to 106 (SLAS…QKES). The segment covering 75-91 (NVGTNRVSAVKSASTKP) has biased composition (polar residues).

Belongs to the cyclin family. Cyclin AB subfamily.

The sequence is that of Cyclin-A1-3 (CYCA1-3) from Oryza sativa subsp. japonica (Rice).